The sequence spans 246 residues: Phosphonates import ATP-binding protein PhnC (246 aa).

Positions 2–246 (IKFENVSKVY…ILDEVYRKEG (245 aa)) constitute an ABC transporter domain. Position 35–42 (35–42 (GTSGAGKS)) interacts with ATP.

This sequence belongs to the ABC transporter superfamily. Phosphonates importer (TC 3.A.1.9.1) family. The complex is composed of two ATP-binding proteins (PhnC), two transmembrane proteins (PhnE) and a solute-binding protein (PhnD).

The protein resides in the cell membrane. It catalyses the reaction phosphonate(out) + ATP + H2O = phosphonate(in) + ADP + phosphate + H(+). Part of the ABC transporter complex PhnCDE involved in phosphonates import. Responsible for energy coupling to the transport system. This chain is Phosphonates import ATP-binding protein PhnC, found in Lactococcus lactis subsp. cremoris (strain SK11).